The chain runs to 525 residues: GMP synthase [glutamine-hydrolyzing] (525 aa).

A Glutamine amidotransferase type-1 domain is found at 9–207; it reads RILILDFGSQ…ILDICECEAL (199 aa). Cys86 (nucleophile) is an active-site residue. Catalysis depends on residues His181 and Glu183. In terms of domain architecture, GMPS ATP-PPase spans 208 to 400; that stretch reads WTPSKIAEDA…LGLPYDMVYR (193 aa). 235-241 is a binding site for ATP; it reads SGGVDSS.

As to quaternary structure, homodimer.

The catalysed reaction is XMP + L-glutamine + ATP + H2O = GMP + L-glutamate + AMP + diphosphate + 2 H(+). It functions in the pathway purine metabolism; GMP biosynthesis; GMP from XMP (L-Gln route): step 1/1. Its function is as follows. Catalyzes the synthesis of GMP from XMP. This chain is GMP synthase [glutamine-hydrolyzing], found in Pseudomonas fluorescens (strain SBW25).